The chain runs to 352 residues: tRNA uridine(34) hydroxylase (352 aa).

In terms of domain architecture, Rhodanese spans 146–240; the sequence is DNPDTLFVDM…YARKAREQGL (95 aa). Cys200 (cysteine persulfide intermediate) is an active-site residue. Basic and acidic residues predominate over residues 315–328; the sequence is ETEQRARRAGRENG. The segment at 315–352 is disordered; the sequence is ETEQRARRAGRENGAKIFNKSRHRLQDGLNSTSLQSVE. The segment covering 342 to 352 has biased composition (polar residues); sequence GLNSTSLQSVE.

This sequence belongs to the TrhO family.

It carries out the reaction uridine(34) in tRNA + AH2 + O2 = 5-hydroxyuridine(34) in tRNA + A + H2O. Its function is as follows. Catalyzes oxygen-dependent 5-hydroxyuridine (ho5U) modification at position 34 in tRNAs. The sequence is that of tRNA uridine(34) hydroxylase from Photorhabdus laumondii subsp. laumondii (strain DSM 15139 / CIP 105565 / TT01) (Photorhabdus luminescens subsp. laumondii).